Here is an 828-residue protein sequence, read N- to C-terminus: DNA gyrase subunit A (828 aa).

Residues 32–497 (LPDVRDGLKP…EVLSLEDEDL (466 aa)) enclose the Topo IIA-type catalytic domain. The O-(5'-phospho-DNA)-tyrosine intermediate role is filled by tyrosine 120. A GyrA-box motif is present at residues 524-530 (QKRGGRG).

Belongs to the type II topoisomerase GyrA/ParC subunit family. In terms of assembly, heterotetramer, composed of two GyrA and two GyrB chains. In the heterotetramer, GyrA contains the active site tyrosine that forms a transient covalent intermediate with DNA, while GyrB binds cofactors and catalyzes ATP hydrolysis.

It is found in the cytoplasm. It carries out the reaction ATP-dependent breakage, passage and rejoining of double-stranded DNA.. A type II topoisomerase that negatively supercoils closed circular double-stranded (ds) DNA in an ATP-dependent manner to modulate DNA topology and maintain chromosomes in an underwound state. Negative supercoiling favors strand separation, and DNA replication, transcription, recombination and repair, all of which involve strand separation. Also able to catalyze the interconversion of other topological isomers of dsDNA rings, including catenanes and knotted rings. Type II topoisomerases break and join 2 DNA strands simultaneously in an ATP-dependent manner. In Streptococcus pyogenes serotype M6 (strain ATCC BAA-946 / MGAS10394), this protein is DNA gyrase subunit A.